A 264-amino-acid polypeptide reads, in one-letter code: Cell division protein FtsQ (264 aa).

The interval 1-24 (MAGPTTAERGDRQQESSGPPPARW) is disordered. Over 1–31 (MAGPTTAERGDRQQESSGPPPARWSGTRRLR) the chain is Cytoplasmic. A helical membrane pass occupies residues 32–52 (ALVVLAALLVLLAGGCAWLLY). The Extracellular portion of the chain corresponds to 53 to 264 (GSSWLRLERV…VPTAPASSGS (212 aa)). The region spanning 57–126 (LRLERVSVSG…HGIGLKVTER (70 aa)) is the POTRA domain.

This sequence belongs to the FtsQ/DivIB family. FtsQ subfamily.

It localises to the cell membrane. Functionally, essential cell division protein. This is Cell division protein FtsQ from Streptomyces collinus.